Reading from the N-terminus, the 138-residue chain is 2-amino-3-carboxymuconate-6-semialdehyde decarboxylase (138 aa).

2 residues coordinate Zn(2+): H6 and H8. R47 lines the substrate pocket. Zn(2+) contacts are provided by H70 and D126.

This sequence belongs to the metallo-dependent hydrolases superfamily. ACMSD family. As to quaternary structure, monomer.

The enzyme catalyses 2-amino-3-carboxymuconate 6-semialdehyde + H(+) = 2-aminomuconate 6-semialdehyde + CO2. It functions in the pathway secondary metabolite metabolism; quinolate metabolism. In terms of biological role, converts alpha-amino-beta-carboxymuconate-epsilon-semialdehyde (ACMS) to alpha-aminomuconate semialdehyde (AMS). ACMS can be converted non-enzymatically to quinolate (QA), a key precursor of NAD, and a potent endogenous excitotoxin of neuronal cells which is implicated in the pathogenesis of various neurodegenerative disorders. In the presence of ACMSD, ACMS is converted to AMS, a benign catabolite. ACMSD ultimately controls the metabolic fate of tryptophan catabolism along the kynurenine pathway. This is 2-amino-3-carboxymuconate-6-semialdehyde decarboxylase (ACMSD) from Sus scrofa (Pig).